The following is a 188-amino-acid chain: Probable nicotinate-nucleotide adenylyltransferase (188 aa).

The protein belongs to the NadD family.

It catalyses the reaction nicotinate beta-D-ribonucleotide + ATP + H(+) = deamido-NAD(+) + diphosphate. The protein operates within cofactor biosynthesis; NAD(+) biosynthesis; deamido-NAD(+) from nicotinate D-ribonucleotide: step 1/1. In terms of biological role, catalyzes the reversible adenylation of nicotinate mononucleotide (NaMN) to nicotinic acid adenine dinucleotide (NaAD). The chain is Probable nicotinate-nucleotide adenylyltransferase from Salinispora arenicola (strain CNS-205).